A 445-amino-acid polypeptide reads, in one-letter code: Phosphoglucosamine mutase (445 aa).

Ser99 functions as the Phosphoserine intermediate in the catalytic mechanism. Residues Ser99, Asp242, Asp244, and Asp246 each coordinate Mg(2+). The residue at position 99 (Ser99) is a Phosphoserine.

Belongs to the phosphohexose mutase family. Mg(2+) serves as cofactor. Activated by phosphorylation.

The enzyme catalyses alpha-D-glucosamine 1-phosphate = D-glucosamine 6-phosphate. Catalyzes the conversion of glucosamine-6-phosphate to glucosamine-1-phosphate. This Helicobacter acinonychis (strain Sheeba) protein is Phosphoglucosamine mutase.